Consider the following 215-residue polypeptide: Probable nicotinate-nucleotide adenylyltransferase (215 aa).

Belongs to the NadD family.

The enzyme catalyses nicotinate beta-D-ribonucleotide + ATP + H(+) = deamido-NAD(+) + diphosphate. It participates in cofactor biosynthesis; NAD(+) biosynthesis; deamido-NAD(+) from nicotinate D-ribonucleotide: step 1/1. Its function is as follows. Catalyzes the reversible adenylation of nicotinate mononucleotide (NaMN) to nicotinic acid adenine dinucleotide (NaAD). The protein is Probable nicotinate-nucleotide adenylyltransferase of Fervidobacterium nodosum (strain ATCC 35602 / DSM 5306 / Rt17-B1).